A 64-amino-acid chain; its full sequence is Protein DsrB (64 aa).

Belongs to the DsrB family.

The protein is Protein DsrB of Salmonella arizonae (strain ATCC BAA-731 / CDC346-86 / RSK2980).